Reading from the N-terminus, the 713-residue chain is Polyribonucleotide nucleotidyltransferase (713 aa).

Positions 485 and 491 each coordinate Mg(2+). Positions 552–611 (PRIYTMKIDPKKIKDVIGKGGATVRSLTEETGTSIDIDDDGTVKIAAVDKNAVQEVMSRI) constitute a KH domain. The S1 motif domain occupies 621 to 689 (GVVYKGKVTR…RQGRIRLTMK (69 aa)). Residues 694–713 (DQTKNEENLLQSEEGSPVQE) are disordered. A compositionally biased stretch (polar residues) spans 701-713 (NLLQSEEGSPVQE).

This sequence belongs to the polyribonucleotide nucleotidyltransferase family. As to quaternary structure, component of the RNA degradosome, which is a multiprotein complex involved in RNA processing and mRNA degradation. Mg(2+) is required as a cofactor.

The protein localises to the cytoplasm. It carries out the reaction RNA(n+1) + phosphate = RNA(n) + a ribonucleoside 5'-diphosphate. Its function is as follows. Involved in mRNA degradation. Catalyzes the phosphorolysis of single-stranded polyribonucleotides processively in the 3'- to 5'-direction. In Histophilus somni (strain 2336) (Haemophilus somnus), this protein is Polyribonucleotide nucleotidyltransferase.